The following is a 314-amino-acid chain: 4-hydroxy-3-methylbut-2-enyl diphosphate reductase (314 aa).

Cysteine 12 serves as a coordination point for [4Fe-4S] cluster. The (2E)-4-hydroxy-3-methylbut-2-enyl diphosphate site is built by histidine 41 and histidine 74. Histidine 41 and histidine 74 together coordinate dimethylallyl diphosphate. Positions 41 and 74 each coordinate isopentenyl diphosphate. Cysteine 96 is a [4Fe-4S] cluster binding site. Histidine 124 is a binding site for (2E)-4-hydroxy-3-methylbut-2-enyl diphosphate. Histidine 124 lines the dimethylallyl diphosphate pocket. Histidine 124 lines the isopentenyl diphosphate pocket. Glutamate 126 serves as the catalytic Proton donor. Threonine 167 contributes to the (2E)-4-hydroxy-3-methylbut-2-enyl diphosphate binding site. Cysteine 197 provides a ligand contact to [4Fe-4S] cluster. The (2E)-4-hydroxy-3-methylbut-2-enyl diphosphate site is built by serine 225, serine 226, asparagine 227, and serine 269. Dimethylallyl diphosphate contacts are provided by serine 225, serine 226, asparagine 227, and serine 269. Isopentenyl diphosphate-binding residues include serine 225, serine 226, asparagine 227, and serine 269.

Belongs to the IspH family. The cofactor is [4Fe-4S] cluster.

The catalysed reaction is isopentenyl diphosphate + 2 oxidized [2Fe-2S]-[ferredoxin] + H2O = (2E)-4-hydroxy-3-methylbut-2-enyl diphosphate + 2 reduced [2Fe-2S]-[ferredoxin] + 2 H(+). It carries out the reaction dimethylallyl diphosphate + 2 oxidized [2Fe-2S]-[ferredoxin] + H2O = (2E)-4-hydroxy-3-methylbut-2-enyl diphosphate + 2 reduced [2Fe-2S]-[ferredoxin] + 2 H(+). It participates in isoprenoid biosynthesis; dimethylallyl diphosphate biosynthesis; dimethylallyl diphosphate from (2E)-4-hydroxy-3-methylbutenyl diphosphate: step 1/1. It functions in the pathway isoprenoid biosynthesis; isopentenyl diphosphate biosynthesis via DXP pathway; isopentenyl diphosphate from 1-deoxy-D-xylulose 5-phosphate: step 6/6. Functionally, catalyzes the conversion of 1-hydroxy-2-methyl-2-(E)-butenyl 4-diphosphate (HMBPP) into a mixture of isopentenyl diphosphate (IPP) and dimethylallyl diphosphate (DMAPP). Acts in the terminal step of the DOXP/MEP pathway for isoprenoid precursor biosynthesis. The chain is 4-hydroxy-3-methylbut-2-enyl diphosphate reductase from Histophilus somni (strain 2336) (Haemophilus somnus).